The chain runs to 1015 residues: Putative helicase mov-10-B.2 (1015 aa).

A disordered region spans residues Gln-94–Gly-130. Residues Thr-109–Gly-123 show a composition bias toward polar residues. Gly-555–Thr-562 contributes to the ATP binding site. A DEAG box motif is present at residues Asp-677–Gly-680.

It belongs to the DNA2/NAM7 helicase family. SDE3 subfamily.

It is found in the cytoplasm. The protein localises to the P-body. The enzyme catalyses ATP + H2O = ADP + phosphate + H(+). Functionally, probable RNA helicase. Required for RNA-mediated gene silencing by the RNA-induced silencing complex (RISC). Required for both miRNA-mediated translational repression and miRNA-mediated cleavage of complementary mRNAs by RISC. The sequence is that of Putative helicase mov-10-B.2 (mov10b.2) from Danio rerio (Zebrafish).